Consider the following 348-residue polypeptide: EGF-like domain-containing protein 1 (348 aa).

The N-terminal stretch at 1 to 19 (MFYLSTFMTIVISLSLVSC) is a signal peptide. Residues 60-92 (TGSNCTVTCQNNGKCYDGSKCLCSSDYTGDLCE) enclose the EGF-like domain. Cystine bridges form between C64/C74, C68/C80, and C82/C91. The ZP domain occupies 99–342 (RCTLDAVVFE…PTCAAPXVGQ (244 aa)).

As to expression, prismatic layer of shell (at protein level). Expressed primarily in the mantle with highest level in the mantle edge and lower level in the mantle pallium.

The protein localises to the secreted. This is EGF-like domain-containing protein 1 from Pinctada maxima (Silver-lipped pearl oyster).